A 513-amino-acid chain; its full sequence is DNA damage response protein kinase DUN1 (513 aa).

Residues 1–12 (MSLSTKREHSGD) are compositionally biased toward basic and acidic residues. Residues 1–29 (MSLSTKREHSGDVTDSSFKRQQRSNKPSS) are disordered. Ser-10 is modified (phosphoserine). The FHA domain occupies 56-112 (TTIGRSRSCDVILSEPDISTFHAEFHLLQMDVDNFQRNLINVIDKSRNGTFINGNRL). Residue Ser-139 is modified to Phosphoserine. The Protein kinase domain occupies 200–480 (YLLGKELGAG…IDEALNHPWF (281 aa)). ATP is bound by residues 206 to 214 (LGAGHYALV) and Lys-229. Residue Asp-328 is the Proton acceptor of the active site. Thr-380 carries the post-translational modification Phosphothreonine.

Belongs to the protein kinase superfamily. CAMK Ser/Thr protein kinase family. CHEK2 subfamily. As to quaternary structure, interacts with the PAB-dependent poly(A)-nuclease (PAN) complex regulatory subunit PAN3 via its forkhead-associated (FHA) domain. Post-translationally, autophosphorylation increases in response to DNA damage.

Its subcellular location is the nucleus. The catalysed reaction is L-seryl-[protein] + ATP = O-phospho-L-seryl-[protein] + ADP + H(+). It catalyses the reaction L-threonyl-[protein] + ATP = O-phospho-L-threonyl-[protein] + ADP + H(+). Functionally, transducer of the DNA damage signal. Phosphorylates SML1 on serine residues. Cooperates with the PAN deadenylation complex in the regulation of RAD5 mRNA levels and cell survival in response to replicational stress. This chain is DNA damage response protein kinase DUN1 (DUN1), found in Saccharomyces cerevisiae (strain ATCC 204508 / S288c) (Baker's yeast).